The primary structure comprises 719 residues: Forkhead box protein K1 (719 aa).

Residue alanine 2 is modified to N-acetylalanine. An interaction with SIN3A and SIN3B region spans residues 2–40 (AEVGEDSGARALLALRSAPCSPVLCAAAAAAAFPATTSP). The interval 35–67 (PATTSPPPPAQPPPGPPALPAEPGPGPVPSTVA) is disordered. Residues 38–62 (TSPPPPAQPPPGPPALPAEPGPGPV) show a composition bias toward pro residues. The tract at residues 81-406 (AASVRQSPGP…PLSSRSAPAS (326 aa)) is required for interaction with FOXO4 and MEF2C. At serine 87 the chain carries Phosphoserine. One can recognise an FHA domain in the interval 109–161 (VTIGRNSSQGSVDLSMGLSSFISRRHLQLSFQEPHFYLRCLGKNGVFVDGAFQ). Arginine 147 and arginine 177 each carry omega-N-methylarginine. Phosphoserine occurs at positions 199, 209, 225, and 229. A phosphothreonine mark is found at threonine 231 and threonine 233. 4 positions are modified to phosphoserine: serine 239, serine 243, serine 281, and serine 285. Positions 291 to 386 (KPPYSYAQLI…EQAFRKRRQR (96 aa)) form a DNA-binding region, fork-head. Residues 399 to 443 (SSRSAPASPTHPGLMSPRSSGLQTPECLSREGSPIPHDPDLGSKL) form a disordered region. A phosphoserine mark is found at serine 402 and serine 406. At threonine 408 the chain carries Phosphothreonine. Serine 414 is modified (phosphoserine). Position 422 is a phosphothreonine (threonine 422). Phosphoserine is present on residues serine 427, serine 431, and serine 445. The span at 665–685 (AANAAPTPAASTTTSASSSGE) shows a compositional bias: low complexity. The disordered stretch occupies residues 665 to 719 (AANAAPTPAASTTTSASSSGEPEVKRSRVEEPGGTATTQPTAMAATGPQGPGTGE). Over residues 686–695 (PEVKRSRVEE) the composition is skewed to basic and acidic residues. Residues 696 to 712 (PGGTATTQPTAMAATGP) show a composition bias toward low complexity.

As to quaternary structure, interacts with SIN3A and SIN3B (via PAH2) to form a complex which represses transcription. Component of SIN3A-, but not SIN3B-, containing multiprotein complexes. Interacts with FOXO4 and MEF2C; both interactions inhibit FOXO4 and MEF2C transactivation activity. Interacts (when phosphorylated) with YWHAE/14-3-3-epsilon; promotes sequestration in the cytoplasm and leads to impaired ability to bind DNA. Interacts with FHL2. Interacts with SRF. Interacts with DVL2 and DVL3; the interaction induces DVL2 nuclear translocation. Interacts with BAP1 (when phosphorylated). Accessory component of the polycomb repressive deubiquitinase (PR-DUB) complex, at least composed of BAP1, one of ASXL1, ASXL2 or (probably) ASXL3 and one of MBD5 or MBD6. The PR-DUB core associates with a number of accessory proteins, including FOXK1, FOXK2, KDM1B, HCFC1 and OGT. Phosphorylation by GSK3 (GSK3A or GSK3B) promotes interaction with YWHAE/14-3-3-epsilon and retention in the cytoplasm. In response to mTORC1 signaling, phosphorylation by GSK3 is prevented, leading to translocation to the nucleus. Expressed in tissues and cells in which the myoglobin gene is transcriptionally active including cardiac and skeletal myocytes, brain and kidney. In the adult brain, expressed in the piriform cortex and the indusium griseum. In the hippocampus, expression is localized to the dentate gyrus and CA3 area. In the cerebellum, expression is confined to the Purkinje cell layer. Present in neuroretinal cells: expressed in rod bipolar cells, amacrine cells and ganglion cells (at protein level).

The protein localises to the nucleus. The protein resides in the cytoplasm. Transcriptional regulator involved in different processes such as glucose metabolism, aerobic glycolysis, muscle cell differentiation and autophagy. Recognizes and binds the forkhead DNA sequence motif (5'-GTAAACA-3') and can both act as a transcription activator or repressor, depending on the context. Together with FOXK2, acts as a key regulator of metabolic reprogramming towards aerobic glycolysis, a process in which glucose is converted to lactate in the presence of oxygen. Acts by promoting expression of enzymes for glycolysis (such as hexokinase-2 (HK2), phosphofructokinase, pyruvate kinase (PKLR) and lactate dehydrogenase), while suppressing further oxidation of pyruvate in the mitochondria by up-regulating pyruvate dehydrogenase kinases PDK1 and PDK4. Probably plays a role in gluconeogenesis during overnight fasting, when lactate from white adipose tissue and muscle is the main substrate. Involved in mTORC1-mediated metabolic reprogramming: in response to mTORC1 signaling, translocates into the nucleus and regulates the expression of genes associated with glycolysis and downstream anabolic pathways, such as HIF1A, thereby regulating glucose metabolism. Together with FOXK2, acts as a negative regulator of autophagy in skeletal muscle: in response to starvation, enters the nucleus, binds the promoters of autophagy genes and represses their expression, preventing proteolysis of skeletal muscle proteins. Acts as a transcriptional regulator of the myogenic progenitor cell population in skeletal muscle. Binds to the upstream enhancer region (CCAC box) of myoglobin (MB) gene, regulating the myogenic progenitor cell population. Promotes muscle progenitor cell proliferation by repressing the transcriptional activity of FOXO4, thereby inhibiting myogenic differentiation. Involved in remodeling processes of adult muscles that occur in response to physiological stimuli. Required to correct temporal orchestration of molecular and cellular events necessary for muscle repair. Represses myogenic differentiation by inhibiting MEFC activity. Positively regulates Wnt/beta-catenin signaling by translocating DVL into the nucleus. Reduces virus replication, probably by binding the interferon stimulated response element (ISRE) to promote antiviral gene expression. Accessory component of the polycomb repressive deubiquitinase (PR-DUB) complex; recruits the PR-DUB complex to specific FOXK1-bound genes. The chain is Forkhead box protein K1 from Mus musculus (Mouse).